Consider the following 176-residue polypeptide: 3-hydroxydecanoyl-[acyl-carrier-protein] dehydratase (176 aa).

The active site involves His-70.

Belongs to the thioester dehydratase family. FabA subfamily. In terms of assembly, homodimer.

Its subcellular location is the cytoplasm. It carries out the reaction a (3R)-hydroxyacyl-[ACP] = a (2E)-enoyl-[ACP] + H2O. The catalysed reaction is (3R)-hydroxydecanoyl-[ACP] = (2E)-decenoyl-[ACP] + H2O. It catalyses the reaction (2E)-decenoyl-[ACP] = (3Z)-decenoyl-[ACP]. It functions in the pathway lipid metabolism; fatty acid biosynthesis. Necessary for the introduction of cis unsaturation into fatty acids. Catalyzes the dehydration of (3R)-3-hydroxydecanoyl-ACP to E-(2)-decenoyl-ACP and then its isomerization to Z-(3)-decenoyl-ACP. Can catalyze the dehydratase reaction for beta-hydroxyacyl-ACPs with saturated chain lengths up to 16:0, being most active on intermediate chain length. The chain is 3-hydroxydecanoyl-[acyl-carrier-protein] dehydratase from Alkalilimnicola ehrlichii (strain ATCC BAA-1101 / DSM 17681 / MLHE-1).